We begin with the raw amino-acid sequence, 1542 residues long: Pleiotropic ABC efflux transporter of multiple drugs PDH1 (1542 aa).

The span at 1–14 shows a compositional bias: low complexity; the sequence is MNTPDDSSVSSVDS. The tract at residues 1-61 is disordered; it reads MNTPDDSSVS…APADGSAPLD (61 aa). Residues 1–517 are Cytoplasmic-facing; it reads MNTPDDSSVS…LIRNFWRIKN (517 aa). A compositionally biased stretch (basic and acidic residues) spans 24–33; the sequence is NVEKRIRELA. Polar residues predominate over residues 35 to 47; sequence SLTQQSLTSSNRS. One can recognise an ABC transporter 1 domain in the interval 153 to 409; sequence VKLLNAVWRK…FQKMGYFCPK (257 aa). 6 consecutive transmembrane segments (helical) span residues 518 to 540, 552 to 574, 603 to 625, 634 to 652, 662 to 684, and 773 to 792; these read SASV…GSMF, FYFR…LLEI, VISE…YFLV, FFFY…SHLF, LQEA…GFAI, and GFGV…LILC. The Cytoplasmic segment spans residues 793-1220; it reads EFNEGAKQKG…LFQQYWRTPD (428 aa). Over residues 825-834 the composition is skewed to basic and acidic residues; sequence TKMHTDKNDI. The disordered stretch occupies residues 825 to 846; it reads TKMHTDKNDIENNSESITSNAT. The span at 835 to 846 shows a compositional bias: polar residues; sequence ENNSESITSNAT. Residues 885–1128 enclose the ABC transporter 2 domain; that stretch reads FHWQNLCYDV…MIKYFEDHGA (244 aa). ATP is bound at residue 921 to 928; that stretch reads GASGAGKT. 6 helical membrane-spanning segments follow: residues 1221 to 1241, 1256 to 1276, 1296 to 1316, 1342 to 1362, 1370 to 1390, and 1495 to 1515; these read YLWS…FTFF, SIFM…PTFV, AFIL…GTLA, LFWL…LFVI, TAAH…GVMA, and GIFI…YWLA. Residues 1516–1542 lie on the Cytoplasmic side of the membrane; the sequence is RVPKTNGKIAKNGKTAKVNFIRRLIPF.

This sequence belongs to the ABC transporter superfamily. ABCG family. PDR (TC 3.A.1.205) subfamily. Post-translationally, phosphorylated by PKA. Dephosphorylated on glucose depletion and independently rephosphorylated during glucose exposure or under stress.

The protein localises to the cell membrane. Pleiotropic ABC efflux transporter that confers resistance to structurally and functionally unrelated compounds including caspofungin or azoles such as fluconazole, itraconazole, posaconazole, voriconazole, and isavuconazole. Does not play a role in the azole resistance in mature biofilms. This chain is Pleiotropic ABC efflux transporter of multiple drugs PDH1, found in Candida glabrata (strain ATCC 2001 / BCRC 20586 / JCM 3761 / NBRC 0622 / NRRL Y-65 / CBS 138) (Yeast).